Here is a 784-residue protein sequence, read N- to C-terminus: Cadherin-15 (784 aa).

The first 21 residues, 1–21 (MGSALLLALGLLAQSLGLSWA), serve as a signal peptide directing secretion. Positions 22-59 (VPEPKPSTLYPWRRASAPGRVRRAWVIPPISVSENHKR) are excised as a propeptide. 5 consecutive Cadherin domains span residues 60-151 (LPYP…RPAF), 152-259 (LQDV…APEF), 260-374 (TKDE…APVF), 375-480 (PENP…DHAP), and 481-589 (ALAL…TCLP). Over 60 to 605 (LPYPLVQIKS…GGGVGVSLGA (546 aa)) the chain is Extracellular. 2 N-linked (GlcNAc...) asparagine glycosylation sites follow: N106 and N226. N-linked (GlcNAc...) asparagine glycans are attached at residues N530, N537, and N575. A helical transmembrane segment spans residues 606–625 (LVIVLASTVVLLVLILLAAL). At 626–784 (RTRFRGHSRG…ARLADMYGHQ (159 aa)) the chain is on the cytoplasmic side. Positions 676-700 (EPRATSRSLGRPPLRRDAPFSYVPQ) are disordered.

In terms of tissue distribution, skeletal muscle.

Its subcellular location is the cell membrane. In terms of biological role, cadherins are calcium-dependent cell adhesion proteins. They preferentially interact with themselves in a homophilic manner in connecting cells; cadherins may thus contribute to the sorting of heterogeneous cell types. M-cadherin is part of the myogenic program and may provide a trigger for terminal muscle differentiation. This Mus musculus (Mouse) protein is Cadherin-15 (Cdh15).